Here is a 39-residue protein sequence, read N- to C-terminus: Cytochrome b559 subunit beta (39 aa).

A helical membrane pass occupies residues 14-30 (WLAVHGLAIPTVSFLGS). Histidine 18 is a heme binding site.

This sequence belongs to the PsbE/PsbF family. As to quaternary structure, heterodimer of an alpha subunit and a beta subunit. PSII is composed of 1 copy each of membrane proteins PsbA, PsbB, PsbC, PsbD, PsbE, PsbF, PsbH, PsbI, PsbJ, PsbK, PsbL, PsbM, PsbT, PsbX, PsbY, PsbZ, Psb30/Ycf12, at least 3 peripheral proteins of the oxygen-evolving complex and a large number of cofactors. It forms dimeric complexes. Heme b is required as a cofactor.

The protein localises to the plastid. It is found in the chloroplast thylakoid membrane. Its function is as follows. This b-type cytochrome is tightly associated with the reaction center of photosystem II (PSII). PSII is a light-driven water:plastoquinone oxidoreductase that uses light energy to abstract electrons from H(2)O, generating O(2) and a proton gradient subsequently used for ATP formation. It consists of a core antenna complex that captures photons, and an electron transfer chain that converts photonic excitation into a charge separation. The sequence is that of Cytochrome b559 subunit beta from Beta vulgaris (Sugar beet).